The following is a 451-amino-acid chain: Cobalamin reductase PduS (451 aa).

4Fe-4S ferredoxin-type domains lie at 255–284 and 300–330; these read TVLSVAKTVCEQCRLCTDLCPRHLIGHELS and PQLLLTALTCSECNVCESVACPVGISPMRIN. The [4Fe-4S] cluster site is built by Cys-264, Cys-267, Cys-270, Cys-274, Cys-309, Cys-312, Cys-315, and Cys-320.

The protein belongs to the PduS cobalamin reductase family. As to quaternary structure, monomer, forms a complex with PduO. Interacts with PduT, probably via the N-terminus of PduS. Requires [4Fe-4S] cluster as cofactor. The cofactor is FMN.

It is found in the bacterial microcompartment. Its pathway is polyol metabolism; 1,2-propanediol degradation. In terms of biological role, a bifunctional cobalamin reductase that converts cob(III)alamin to cob(II)alamin and then to cob(I)alamin in the bacterial microcompartment (BMC) dedicated to 1,2-propanediol (1,2-PD) degradation. PduS and PduO allow regeneration of the adenosylcobalamin cofactor within the BMC. Cobalamin reduction probably occurs spontaneously in the presence of free reduced flavin nucleotides, this protein may be involved in electron transfer for this reduction. Expression of a cosmid containing the full 21-gene pdu operon in E.coli allows E.coli to grow on 1,2-propanediol (1,2-PD) with the appearance of BMCs in its cytoplasm. Its function is as follows. The 1,2-PD-specific bacterial microcompartment (BMC) concentrates low levels of 1,2-PD catabolic enzymes, concentrates volatile reaction intermediates thus enhancing pathway flux and keeps the level of toxic, mutagenic propionaldehyde low. The protein is Cobalamin reductase PduS of Citrobacter freundii.